The sequence spans 222 residues: Methionine import system permease protein MetP (222 aa).

One can recognise an ABC transmembrane type-1 domain in the interval 18–212; that stretch reads TYETLYMTLI…IIVFIIQIIG (195 aa). 5 consecutive transmembrane segments (helical) span residues 25–45, 73–93, 97–117, 152–172, and 195–215; these read TLIS…LLFL, FLIL…TILG, ALPA…EIAL, ISGI…AGAI, and FVAT…GDLI.

The protein belongs to the binding-protein-dependent transport system permease family. CysTW subfamily. The complex is composed of two ATP-binding proteins (MetN), two transmembrane proteins (MetP) and a solute-binding protein (MetQ).

The protein resides in the cell membrane. In terms of biological role, part of the ABC transporter complex MetNPQ involved in methionine import. Responsible for the translocation of the substrate across the membrane. It has also been shown to be involved in methionine sulfoxide transport. The protein is Methionine import system permease protein MetP (metP) of Bacillus subtilis (strain 168).